The primary structure comprises 385 residues: MGPLEAIGEENQTDEMKMELFTKLYLPRYTTPVSELALDPKPELKDSTTLVEVQIILIFAYCSIILLGVIGNSLVIHVIIKFKSMRTVTNFFIANLAVADLLVNTLCLPFTLVYTLLGEWKLGPVLCHLVPYAQALAVHVSTVTLTVIALDRHRCIVYHLESKISKRISFLIIGVAWAVSALLASPLAIFREYSLIEIIPDFKIVVCSEKWPGEGQLNYGTIYSVSMLLIQYVLPLAIISYAYTRIWTKLKNHVSPGAGNDHYHHRRQKTTKMLVCVVVVFAVSWLPFHAFQLVSDIDSQVLDLKEYKLIYTVFHVIAMCSTFANPLLYGWMNNNYRTAFLTAFQCEQRLDSIHPEVSAAFKARKKLEAKKSQFPGDSFTQPTNV.

At 1–54 (MGPLEAIGEENQTDEMKMELFTKLYLPRYTTPVSELALDPKPELKDSTTLVEVQ) the chain is on the extracellular side. N-linked (GlcNAc...) asparagine glycosylation is present at Asn-11. A helical transmembrane segment spans residues 55 to 75 (IILIFAYCSIILLGVIGNSLV). Residues 76–90 (IHVIIKFKSMRTVTN) are Cytoplasmic-facing. The helical transmembrane segment at 91–111 (FFIANLAVADLLVNTLCLPFT) threads the bilayer. Over 112–128 (LVYTLLGEWKLGPVLCH) the chain is Extracellular. The cysteines at positions 127 and 207 are disulfide-linked. Residues 129 to 149 (LVPYAQALAVHVSTVTLTVIA) form a helical membrane-spanning segment. Topologically, residues 150-169 (LDRHRCIVYHLESKISKRIS) are cytoplasmic. A helical transmembrane segment spans residues 170–190 (FLIIGVAWAVSALLASPLAIF). Residues 191-221 (REYSLIEIIPDFKIVVCSEKWPGEGQLNYGT) lie on the Extracellular side of the membrane. Residues 222-242 (IYSVSMLLIQYVLPLAIISYA) traverse the membrane as a helical segment. The Cytoplasmic portion of the chain corresponds to 243-273 (YTRIWTKLKNHVSPGAGNDHYHHRRQKTTKM). A helical membrane pass occupies residues 274-294 (LVCVVVVFAVSWLPFHAFQLV). Topologically, residues 295-308 (SDIDSQVLDLKEYK) are extracellular. Residues 309 to 329 (LIYTVFHVIAMCSTFANPLLY) traverse the membrane as a helical segment. Residues 330 to 385 (GWMNNNYRTAFLTAFQCEQRLDSIHPEVSAAFKARKKLEAKKSQFPGDSFTQPTNV) lie on the Cytoplasmic side of the membrane. Cys-346 is lipidated: S-palmitoyl cysteine.

It belongs to the G-protein coupled receptor 1 family.

Its subcellular location is the cell membrane. In terms of biological role, receptor for neuropeptide Y and peptide YY. The sequence is that of Neuropeptide Y receptor type 2 (NPY2R) from Gallus gallus (Chicken).